The following is a 1151-amino-acid chain: ATP-dependent RNA helicase ddx46 (1151 aa).

2 stretches are compositionally biased toward basic and acidic residues: residues 1 to 26 (MDEY…DNRN) and 35 to 51 (YRDD…DRSH). Disordered stretches follow at residues 1-138 (MDEY…SRFD), 166-224 (MYQQ…VFQQ), 287-358 (QELK…PLVN), and 424-449 (TSQM…DKTI). The segment covering 52 to 73 (YNNNNNNNNNNNNNNNNNNGNG) has biased composition (low complexity). Residues 81 to 90 (SSQNKYQNHH) are compositionally biased toward polar residues. 4 stretches are compositionally biased toward low complexity: residues 91 to 124 (QQSP…QPHI), 166 to 199 (MYQQ…FQHH), 207 to 224 (QPPV…VFQQ), and 291 to 339 (ASGS…TTSP). A compositionally biased stretch (acidic residues) spans 428–443 (IDDDEKLEEESEGEDD). The Q motif motif lies at 509 to 537 (QSWAQAGLTEKVHLLLKKFQYEKPTSIQA). The 179-residue stretch at 540 to 718 (IPAIMNGRDL…KKILNKPLEI (179 aa)) folds into the Helicase ATP-binding domain. Residue 553–560 (ARTGSGKT) participates in ATP binding. Positions 666-669 (DEAD) match the DEAD box motif. One can recognise a Helicase C-terminal domain in the interval 729–890 (DIEQFVEVRP…KVPDELRKLN (162 aa)). The interval 904–972 (LLAPTGFTGR…EKEKQLLSEK (69 aa)) is disordered. Over residues 915-930 (HKFDAAEEDKKNIERK) the composition is skewed to basic and acidic residues. A compositionally biased stretch (acidic residues) spans 938–948 (IEEEEEEEDED). The span at 949-972 (KEKAEKEKLAAASAEKEKQLLSEK) shows a compositional bias: basic and acidic residues.

The protein belongs to the DEAD box helicase family. DDX46/PRP5 subfamily. As to quaternary structure, component of the 17S U2 SnRNP complex, a ribonucleoprotein complex that contains small nuclear RNA (snRNA) U2 and a number of specific proteins.

Its subcellular location is the nucleus speckle. The catalysed reaction is ATP + H2O = ADP + phosphate + H(+). Component of the 17S U2 SnRNP complex of the spliceosome, a large ribonucleoprotein complex that removes introns from transcribed pre-mRNAs. The sequence is that of ATP-dependent RNA helicase ddx46 (helB1) from Dictyostelium discoideum (Social amoeba).